The sequence spans 76 residues: uncharacterized protein (76 aa).

This is an uncharacterized protein from Escherichia coli (strain K12).